A 227-amino-acid chain; its full sequence is NADH-quinone oxidoreductase subunit C (227 aa).

Belongs to the complex I 30 kDa subunit family. NDH-1 is composed of 14 different subunits. Subunits NuoB, C, D, E, F, and G constitute the peripheral sector of the complex.

It is found in the cell inner membrane. The catalysed reaction is a quinone + NADH + 5 H(+)(in) = a quinol + NAD(+) + 4 H(+)(out). NDH-1 shuttles electrons from NADH, via FMN and iron-sulfur (Fe-S) centers, to quinones in the respiratory chain. The immediate electron acceptor for the enzyme in this species is believed to be ubiquinone. Couples the redox reaction to proton translocation (for every two electrons transferred, four hydrogen ions are translocated across the cytoplasmic membrane), and thus conserves the redox energy in a proton gradient. In Legionella pneumophila (strain Lens), this protein is NADH-quinone oxidoreductase subunit C.